The chain runs to 330 residues: ADP-L-glycero-D-manno-heptose-6-epimerase (330 aa).

NADP(+)-binding positions include 11-12 (FI), 32-33 (DN), Lys-39, Lys-54, 75-79 (EGACS), and Asn-92. The Proton acceptor role is filled by Tyr-139. An NADP(+)-binding site is contributed by Lys-143. Asn-168 is a binding site for substrate. NADP(+) contacts are provided by Val-169 and Lys-177. The Proton acceptor role is filled by Lys-177. Substrate-binding positions include Arg-179, His-186, 200–203 (FGEY), Arg-213, and Tyr-292.

The protein belongs to the NAD(P)-dependent epimerase/dehydratase family. HldD subfamily. Homopentamer. NADP(+) serves as cofactor.

The enzyme catalyses ADP-D-glycero-beta-D-manno-heptose = ADP-L-glycero-beta-D-manno-heptose. Its pathway is nucleotide-sugar biosynthesis; ADP-L-glycero-beta-D-manno-heptose biosynthesis; ADP-L-glycero-beta-D-manno-heptose from D-glycero-beta-D-manno-heptose 7-phosphate: step 4/4. Functionally, catalyzes the interconversion between ADP-D-glycero-beta-D-manno-heptose and ADP-L-glycero-beta-D-manno-heptose via an epimerization at carbon 6 of the heptose. This is ADP-L-glycero-D-manno-heptose-6-epimerase from Burkholderia pseudomallei (strain K96243).